We begin with the raw amino-acid sequence, 375 residues long: E3 ubiquitin-protein ligase FANCL (375 aa).

Ala2 carries the N-acetylalanine modification. The interval 104–294 (LPPPPQFYSS…KDVLEIDFPA (191 aa)) is UBC-RWD region (URD). Residues Cys307, Cys310, Cys324, Cys329, His334, Cys337, Cys359, and Cys362 each contribute to the Zn(2+) site. The RING-type; degenerate zinc-finger motif lies at 307 to 363 (CGICYAYQLDGTIPDQVCDNSQCGQPFHQICLYEWLRGLLTSRQSFNIIFGECPYCS).

In terms of assembly, interacts with GGN. Belongs to the multisubunit FA complex composed of FANCA, FANCB, FANCC, FANCE, FANCF, FANCG, FANCL/PHF9 and FANCM. The complex is not found in FA patients. In complex with FANCF, FANCA and FANCG, but not with FANCC, nor FANCE, interacts with HES1; this interaction may be essential for the stability and nuclear localization of FA core complex proteins. Interacts with FANCI. Directly interacts (via the RING-type zinc finger) with UBE2T and UBE2W. Post-translationally, the RING-type zinc finger domain is monoubiquitinated in the presence of UBE2T and UBE2W.

It localises to the cytoplasm. Its subcellular location is the nucleus. It carries out the reaction S-ubiquitinyl-[E2 ubiquitin-conjugating enzyme]-L-cysteine + [acceptor protein]-L-lysine = [E2 ubiquitin-conjugating enzyme]-L-cysteine + N(6)-ubiquitinyl-[acceptor protein]-L-lysine.. The protein operates within protein modification; protein ubiquitination. Its function is as follows. Ubiquitin ligase protein that mediates monoubiquitination of FANCD2 in the presence of UBE2T, a key step in the DNA damage pathway. Also mediates monoubiquitination of FANCI. May stimulate the ubiquitin release from UBE2W. May be required for proper primordial germ cell proliferation in the embryonic stage, whereas it is probably not needed for spermatogonial proliferation after birth. The protein is E3 ubiquitin-protein ligase FANCL (FANCL) of Homo sapiens (Human).